Here is a 92-residue protein sequence, read N- to C-terminus: Small ribosomal subunit protein uS19 (92 aa).

The protein belongs to the universal ribosomal protein uS19 family.

Its function is as follows. Protein S19 forms a complex with S13 that binds strongly to the 16S ribosomal RNA. In Shewanella amazonensis (strain ATCC BAA-1098 / SB2B), this protein is Small ribosomal subunit protein uS19.